The primary structure comprises 368 residues: Phosphate acyltransferase (368 aa).

Residues 335 to 368 (VSLGDGEHDAGGAGHTGPAAGQHAEPPAAQSSKA) form a disordered region.

The protein belongs to the PlsX family. Homodimer. Probably interacts with PlsY.

It localises to the cytoplasm. The enzyme catalyses a fatty acyl-[ACP] + phosphate = an acyl phosphate + holo-[ACP]. The protein operates within lipid metabolism; phospholipid metabolism. Its function is as follows. Catalyzes the reversible formation of acyl-phosphate (acyl-PO(4)) from acyl-[acyl-carrier-protein] (acyl-ACP). This enzyme utilizes acyl-ACP as fatty acyl donor, but not acyl-CoA. The protein is Phosphate acyltransferase of Burkholderia vietnamiensis (strain G4 / LMG 22486) (Burkholderia cepacia (strain R1808)).